Reading from the N-terminus, the 336-residue chain is UPF0284 protein PYRAB00380 (336 aa).

The protein belongs to the UPF0284 family.

The sequence is that of UPF0284 protein PYRAB00380 from Pyrococcus abyssi (strain GE5 / Orsay).